Consider the following 83-residue polypeptide: Protein Vpu (83 aa).

Topologically, residues 1–4 (MLSL) are extracellular. Residues 5–25 (GFIALGAAVSIAVIVWALLYR) traverse the membrane as a helical segment. The Cytoplasmic segment spans residues 26 to 83 (EYKKIKLQEKIKHIRQRIREREEDSGNESDGDAEWLDGDEEWLVTLLSSSKLDQGNWV). Residues serine 50 and serine 54 each carry the phosphoserine; by host CK2 modification.

The protein belongs to the HIV-1 VPU protein family. Homopentamer. Interacts with host CD4 and BRTC; these interactions induce proteasomal degradation of CD4. Interacts with host BST2; this interaction leads to the degradation of host BST2. Interacts with host FBXW11. Interacts with host AP1M1; this interaction plays a role in the mistrafficking and subsequent degradation of host BST2. Interacts with host RANBP2; this interaction allows Vpu to down-regulate host BLM sumoylation. Post-translationally, phosphorylated by host CK2. This phosphorylation is necessary for interaction with human BTRC and degradation of CD4.

Its subcellular location is the host membrane. Its activity is regulated as follows. Ion channel activity is inhibited by hexamethylene amiloride in vitro. Its function is as follows. Enhances virion budding by targeting host CD4 and Tetherin/BST2 to proteasome degradation. Degradation of CD4 prevents any unwanted premature interactions between viral Env and its host receptor CD4 in the endoplasmic reticulum. Degradation of antiretroviral protein Tetherin/BST2 is important for virion budding, as BST2 tethers new viral particles to the host cell membrane. Mechanistically, Vpu bridges either CD4 or BST2 to BTRC, a substrate recognition subunit of the Skp1/Cullin/F-box protein E3 ubiquitin ligase, induces their ubiquitination and subsequent proteasomal degradation. The alteration of the E3 ligase specificity by Vpu seems to promote the degradation of host IKBKB, leading to NF-kappa-B down-regulation and subsequent apoptosis. Acts as a viroporin that forms an oligomeric ion channel in membranes. Modulates the host DNA repair mechanisms to promote degradation of nuclear viral cDNA in cells that are already productively infected in order to suppress immune sensing and proviral hyper-integration (superinfection). Manipulates PML-NBs and modulates SUMOylation of host BLM protein thereby enhancing its DNA-end processing activity toward viral unintegrated linear DNA. Also inhibits RAD52-mediated homologous repair of viral cDNA, preventing the generation of dead-end circular forms of single copies of the long terminal repeat and permitting sustained nucleolytic attack. This Human immunodeficiency virus type 1 group N (isolate YBF30) (HIV-1) protein is Protein Vpu.